Reading from the N-terminus, the 460-residue chain is Argininosuccinate lyase (460 aa).

This sequence belongs to the lyase 1 family. Argininosuccinate lyase subfamily.

It is found in the cytoplasm. It carries out the reaction 2-(N(omega)-L-arginino)succinate = fumarate + L-arginine. Its pathway is amino-acid biosynthesis; L-arginine biosynthesis; L-arginine from L-ornithine and carbamoyl phosphate: step 3/3. The polypeptide is Argininosuccinate lyase (Oleidesulfovibrio alaskensis (strain ATCC BAA-1058 / DSM 17464 / G20) (Desulfovibrio alaskensis)).